Consider the following 359-residue polypeptide: Peptide chain release factor 1 (359 aa).

The residue at position 236 (glutamine 236) is an N5-methylglutamine.

The protein belongs to the prokaryotic/mitochondrial release factor family. Methylated by PrmC. Methylation increases the termination efficiency of RF1.

It is found in the cytoplasm. Its function is as follows. Peptide chain release factor 1 directs the termination of translation in response to the peptide chain termination codons UAG and UAA. The polypeptide is Peptide chain release factor 1 (Malacoplasma penetrans (strain HF-2) (Mycoplasma penetrans)).